Here is a 170-residue protein sequence, read N- to C-terminus: Lipoprotein signal peptidase (170 aa).

The next 3 helical transmembrane spans lie at 12 to 32 (WYWV…WVLA), 67 to 87 (WQRW…TVWL), and 93 to 113 (SLLK…GNLV). Catalysis depends on residues Asp-123 and Asp-141. Residues 137 to 157 (FNIADSAIFIGAVLIIWDSFF) form a helical membrane-spanning segment.

It belongs to the peptidase A8 family.

The protein resides in the cell inner membrane. The catalysed reaction is Release of signal peptides from bacterial membrane prolipoproteins. Hydrolyzes -Xaa-Yaa-Zaa-|-(S,diacylglyceryl)Cys-, in which Xaa is hydrophobic (preferably Leu), and Yaa (Ala or Ser) and Zaa (Gly or Ala) have small, neutral side chains.. It participates in protein modification; lipoprotein biosynthesis (signal peptide cleavage). Functionally, this protein specifically catalyzes the removal of signal peptides from prolipoproteins. The protein is Lipoprotein signal peptidase of Shewanella oneidensis (strain ATCC 700550 / JCM 31522 / CIP 106686 / LMG 19005 / NCIMB 14063 / MR-1).